A 264-amino-acid chain; its full sequence is 3-deoxy-manno-octulosonate cytidylyltransferase (264 aa).

The protein belongs to the KdsB family.

The protein resides in the cytoplasm. It carries out the reaction 3-deoxy-alpha-D-manno-oct-2-ulosonate + CTP = CMP-3-deoxy-beta-D-manno-octulosonate + diphosphate. Its pathway is nucleotide-sugar biosynthesis; CMP-3-deoxy-D-manno-octulosonate biosynthesis; CMP-3-deoxy-D-manno-octulosonate from 3-deoxy-D-manno-octulosonate and CTP: step 1/1. It functions in the pathway bacterial outer membrane biogenesis; lipopolysaccharide biosynthesis. Its function is as follows. Activates KDO (a required 8-carbon sugar) for incorporation into bacterial lipopolysaccharide in Gram-negative bacteria. The polypeptide is 3-deoxy-manno-octulosonate cytidylyltransferase (Methylibium petroleiphilum (strain ATCC BAA-1232 / LMG 22953 / PM1)).